The chain runs to 304 residues: MSDTWRRRRSGCNDANATEELVYSTVRSDHRQRRPSRGTFVMRENDLYDKQSVSKENDLYESASPNDDKVYTRRGMSTAAHYRDSEHIYETCEGDEFYDACEYSLIGGGKLSTSNGRQSPAKAQPPPRGAAAAPPPRVPTRPPTRAAATSTTPRQQDCAPKQRASPGVNSIKSGKGLAFSGTPKTPKSQWYGATHLFNKNVFCAAVSRVAAAHASDAASALWDLNPPKTNEDLDRFLKAAAIRILVCEGAQLLEVANSTMESTPDGYAAAGPNGYDRRPRTASRRRSLKCKPPADDFFDDTNSG.

2 disordered regions span residues 23–68 (YSTV…PNDD) and 112–184 (STSN…GTPK). Over residues 43 to 58 (RENDLYDKQSVSKEND) the composition is skewed to basic and acidic residues. Pro residues predominate over residues 123–142 (AQPPPRGAAAAPPPRVPTRP). Over residues 143–154 (PTRAAATSTTPR) the composition is skewed to low complexity. The short motif at 160–163 (PKQR) is the Nuclear localization signal element. Positions 233–245 (LDRFLKAAAIRIL) match the Nuclear export signal motif. The tract at residues 262-304 (STPDGYAAAGPNGYDRRPRTASRRRSLKCKPPADDFFDDTNSG) is disordered. Basic residues predominate over residues 280–289 (RTASRRRSLK).

The protein belongs to the alphaherpesvirinae VP22 tegument protein family. Interacts with gE (via C-terminus); this interaction is necessary for the recruitment of VP22 to the Golgi and its packaging into virions. Interacts with gM (via C-terminus). Interacts with VP16; this interaction allows the formation of a tripartite complex composed of VP16, VP22 and UL41/VHS. Interacts with the capsid-binding protein UL16. Interacts with host CGAS. Highly phosphorylated in the host cell. Packaging is selective for underphosphorylated forms.

The protein resides in the virion tegument. It is found in the host cytoplasm. It localises to the host nucleus. The protein localises to the host Golgi apparatus. Functionally, tegument protein that plays different roles during the time course of infection. Participates in both the accumulation of viral mRNAs and viral protein translation at late time of infection. Modulates the RNase activity of the virion host shutoff protein UL41 probably to ensure necessary levels of key cellular mRNAs and proteins. Plays a role in microtubule reorganization that occurs after viral infection by stabilizing microtubule network. Plays a role in the inhibition of host innate immune system by targeting the CGAS enzymatic activity which is the principal cytosolic DNA sensor that detects invading viral DNA. Acts by mediating disruption of liquid-like droplets in which CGAS is activated, thereby preventing CGAS activity. In Equine herpesvirus 1 (strain Ab4p) (EHV-1), this protein is Tegument protein VP22.